The primary structure comprises 430 residues: tRNA pseudouridine synthase Pus10 (430 aa).

Asp253 functions as the Nucleophile in the catalytic mechanism. Substrate contacts are provided by Tyr320 and Tyr392.

It belongs to the pseudouridine synthase Pus10 family.

The enzyme catalyses uridine(54) in tRNA = pseudouridine(54) in tRNA. The catalysed reaction is uridine(55) in tRNA = pseudouridine(55) in tRNA. Responsible for synthesis of pseudouridine from uracil-54 and uracil-55 in the psi GC loop of transfer RNAs. This Ignisphaera aggregans (strain DSM 17230 / JCM 13409 / AQ1.S1) protein is tRNA pseudouridine synthase Pus10.